Reading from the N-terminus, the 247-residue chain is tRNA pseudouridine synthase A (247 aa).

The active-site Nucleophile is D53. Substrate is bound at residue Y112.

This sequence belongs to the tRNA pseudouridine synthase TruA family. Homodimer.

The catalysed reaction is uridine(38/39/40) in tRNA = pseudouridine(38/39/40) in tRNA. In terms of biological role, formation of pseudouridine at positions 38, 39 and 40 in the anticodon stem and loop of transfer RNAs. This is tRNA pseudouridine synthase A from Anaplasma marginale (strain St. Maries).